Here is a 261-residue protein sequence, read N- to C-terminus: Cytochrome c oxidase subunit 3 (261 aa).

The Mitochondrial matrix portion of the chain corresponds to 1-15; it reads MTHQTHAYHMVNPSP. A helical transmembrane segment spans residues 16–34; that stretch reads WPLTGALSALLMTSGLIMW. Topologically, residues 35 to 40 are mitochondrial intermembrane; that stretch reads FHFNST. The helical transmembrane segment at 41–66 threads the bilayer; it reads ILLMLGLTTNMLTMYQWWRDVIREST. Residues 67-72 are Mitochondrial matrix-facing; it reads FQGHHT. Residues 73-105 traverse the membrane as a helical segment; the sequence is PNVQKGLRYGMILFIISEVLFFTGFFWAFYHSS. Residues 106 to 128 lie on the Mitochondrial intermembrane side of the membrane; the sequence is LAPTPELGGCWPPTGIHPLNPLE. Residues 129 to 152 traverse the membrane as a helical segment; that stretch reads VPLLNTSVLLASGVSITWAHHSLM. Topologically, residues 153-155 are mitochondrial matrix; it reads EGN. The helical transmembrane segment at 156-183 threads the bilayer; that stretch reads RNHMLQALFITIALGVYFTLLQASEYYE. At 184–190 the chain is on the mitochondrial intermembrane side; it reads APFTISD. The chain crosses the membrane as a helical span at residues 191–223; that stretch reads GVYGSTFFVATGFHGLHVIIGSTFLIVCFFRQL. At 224 to 232 the chain is on the mitochondrial matrix side; sequence KFHFTSNHH. Residues 233–256 traverse the membrane as a helical segment; that stretch reads FGFEAAAWYWHFVDVVWLFLYVSI. Over 257-261 the chain is Mitochondrial intermembrane; that stretch reads YWWGS.

This sequence belongs to the cytochrome c oxidase subunit 3 family. In terms of assembly, component of the cytochrome c oxidase (complex IV, CIV), a multisubunit enzyme composed of 14 subunits. The complex is composed of a catalytic core of 3 subunits MT-CO1, MT-CO2 and MT-CO3, encoded in the mitochondrial DNA, and 11 supernumerary subunits COX4I, COX5A, COX5B, COX6A, COX6B, COX6C, COX7A, COX7B, COX7C, COX8 and NDUFA4, which are encoded in the nuclear genome. The complex exists as a monomer or a dimer and forms supercomplexes (SCs) in the inner mitochondrial membrane with NADH-ubiquinone oxidoreductase (complex I, CI) and ubiquinol-cytochrome c oxidoreductase (cytochrome b-c1 complex, complex III, CIII), resulting in different assemblies (supercomplex SCI(1)III(2)IV(1) and megacomplex MCI(2)III(2)IV(2)).

Its subcellular location is the mitochondrion inner membrane. It catalyses the reaction 4 Fe(II)-[cytochrome c] + O2 + 8 H(+)(in) = 4 Fe(III)-[cytochrome c] + 2 H2O + 4 H(+)(out). Component of the cytochrome c oxidase, the last enzyme in the mitochondrial electron transport chain which drives oxidative phosphorylation. The respiratory chain contains 3 multisubunit complexes succinate dehydrogenase (complex II, CII), ubiquinol-cytochrome c oxidoreductase (cytochrome b-c1 complex, complex III, CIII) and cytochrome c oxidase (complex IV, CIV), that cooperate to transfer electrons derived from NADH and succinate to molecular oxygen, creating an electrochemical gradient over the inner membrane that drives transmembrane transport and the ATP synthase. Cytochrome c oxidase is the component of the respiratory chain that catalyzes the reduction of oxygen to water. Electrons originating from reduced cytochrome c in the intermembrane space (IMS) are transferred via the dinuclear copper A center (CU(A)) of subunit 2 and heme A of subunit 1 to the active site in subunit 1, a binuclear center (BNC) formed by heme A3 and copper B (CU(B)). The BNC reduces molecular oxygen to 2 water molecules using 4 electrons from cytochrome c in the IMS and 4 protons from the mitochondrial matrix. This Eudorcas thomsonii (Thomson's gazelle) protein is Cytochrome c oxidase subunit 3 (MT-CO3).